A 345-amino-acid chain; its full sequence is AA9 family lytic polysaccharide monooxygenase D (345 aa).

The signal sequence occupies residues 1–21; sequence MPSFTSKTLLAALAGAAAVNA. Cu(2+) contacts are provided by H22 and H107. An intrachain disulfide couples C77 to C200. N160 is a glycosylation site (N-linked (GlcNAc...) asparagine). Positions 186 and 195 each coordinate O2. Y197 contributes to the Cu(2+) binding site. The interval 315–345 is disordered; that stretch reads VQTSTRPISTRPQPTRCPGLGRRHLRKVARA. The span at 318–327 shows a compositional bias: polar residues; it reads STRPISTRPQ. Positions 335-345 are enriched in basic residues; the sequence is GRRHLRKVARA.

This sequence belongs to the polysaccharide monooxygenase AA9 family. Cu(2+) is required as a cofactor.

The protein localises to the secreted. The enzyme catalyses [(1-&gt;4)-beta-D-glucosyl]n+m + reduced acceptor + O2 = 4-dehydro-beta-D-glucosyl-[(1-&gt;4)-beta-D-glucosyl]n-1 + [(1-&gt;4)-beta-D-glucosyl]m + acceptor + H2O.. In terms of biological role, lytic polysaccharide monooxygenase (LPMO) that depolymerizes crystalline and amorphous polysaccharides via the oxidation of scissile alpha- or beta-(1-4)-glycosidic bonds, yielding C1 or C4 oxidation products. Catalysis by LPMOs requires the reduction of the active-site copper from Cu(II) to Cu(I) by a reducing agent and H(2)O(2) or O(2) as a cosubstrate. The sequence is that of AA9 family lytic polysaccharide monooxygenase D from Podospora anserina (strain S / ATCC MYA-4624 / DSM 980 / FGSC 10383) (Pleurage anserina).